A 160-amino-acid polypeptide reads, in one-letter code: 6,7-dimethyl-8-ribityllumazine synthase (160 aa).

Residues Trp-27, 59 to 61 (AIE), and 81 to 83 (VVI) each bind 5-amino-6-(D-ribitylamino)uracil. Residue 86-87 (QT) participates in (2S)-2-hydroxy-3-oxobutyl phosphate binding. His-89 acts as the Proton donor in catalysis. 5-amino-6-(D-ribitylamino)uracil is bound at residue Asn-114. A (2S)-2-hydroxy-3-oxobutyl phosphate-binding site is contributed by Arg-128.

This sequence belongs to the DMRL synthase family. In terms of assembly, homopentamer.

It catalyses the reaction (2S)-2-hydroxy-3-oxobutyl phosphate + 5-amino-6-(D-ribitylamino)uracil = 6,7-dimethyl-8-(1-D-ribityl)lumazine + phosphate + 2 H2O + H(+). It functions in the pathway cofactor biosynthesis; riboflavin biosynthesis; riboflavin from 2-hydroxy-3-oxobutyl phosphate and 5-amino-6-(D-ribitylamino)uracil: step 1/2. In terms of biological role, catalyzes the formation of 6,7-dimethyl-8-ribityllumazine by condensation of 5-amino-6-(D-ribitylamino)uracil with 3,4-dihydroxy-2-butanone 4-phosphate. This is the penultimate step in the biosynthesis of riboflavin. The sequence is that of 6,7-dimethyl-8-ribityllumazine synthase from Mycobacterium avium (strain 104).